Here is a 163-residue protein sequence, read N- to C-terminus: Nucleotide-binding protein YajQ (163 aa).

The protein belongs to the YajQ family.

Its function is as follows. Nucleotide-binding protein. This Shigella flexneri protein is Nucleotide-binding protein YajQ.